Consider the following 360-residue polypeptide: Peptide chain release factor 1 (360 aa).

N5-methylglutamine is present on Q235. Residues 284 to 313 (AKRQQAEASTRRNLLGSGDRSDRNRTYNFP) are disordered.

This sequence belongs to the prokaryotic/mitochondrial release factor family. Post-translationally, methylated by PrmC. Methylation increases the termination efficiency of RF1.

The protein localises to the cytoplasm. Its function is as follows. Peptide chain release factor 1 directs the termination of translation in response to the peptide chain termination codons UAG and UAA. The polypeptide is Peptide chain release factor 1 (Escherichia coli (strain UTI89 / UPEC)).